Consider the following 224-residue polypeptide: uncharacterized protein (224 aa).

This is an uncharacterized protein from Listeria innocua serovar 6a (strain ATCC BAA-680 / CLIP 11262).